A 300-amino-acid chain; its full sequence is Beta-lactamase (300 aa).

The N-terminal stretch at 1 to 29 (MTMFKTTFRQTATIAVSLISLLVSPMLWA) is a signal peptide. The active-site Acyl-ester intermediate is Ser75. 239 to 241 (KTG) is a binding site for substrate.

It belongs to the class-A beta-lactamase family. As to quaternary structure, monomer.

It carries out the reaction a beta-lactam + H2O = a substituted beta-amino acid. In terms of biological role, hydrolyzes broad-spectrum beta-lactam antibiotics. Active against cephalosporins such as cefuroxime and cefotaxime. The sequence is that of Beta-lactamase (blaB) from Proteus vulgaris.